A 554-amino-acid polypeptide reads, in one-letter code: Glypican-1 (554 aa).

The signal sequence occupies residues 1 to 21 (MERLCWGWWWHLGILCLMHWA). 7 disulfide bridges follow: Cys-32–Cys-68, Cys-62–Cys-256, Cys-69–Cys-259, Cys-191–Cys-343, Cys-246–Cys-279, Cys-268–Cys-415, and Cys-272–Cys-401. N-linked (GlcNAc...) asparagine glycosylation is found at Asn-79 and Asn-116. Positions 346 to 369 (PKKTNKGSKSEERRRKGKATQEDK) are disordered. Positions 353-369 (SKSEERRRKGKATQEDK) are enriched in basic and acidic residues. O-linked (Xyl...) (heparan sulfate) serine glycosylation is found at Ser-486, Ser-488, and Ser-490.

It belongs to the glypican family. O-glycosylated with heparan sulfate side chains.

It is found in the cell membrane. The protein resides in the secreted. The protein localises to the extracellular space. In terms of biological role, cell surface proteoglycan that bears heparan sulfate. This is Glypican-1 (gpc1) from Xenopus tropicalis (Western clawed frog).